Reading from the N-terminus, the 459-residue chain is Alcohol acyl transferase 2 (459 aa).

Active-site proton acceptor residues include histidine 164 and asparagine 385.

This sequence belongs to the plant acyltransferase family. In terms of tissue distribution, highly expressed in the cortex and skin of ripe fruit.

Its function is as follows. Involved in the biosynthesis of volatile esters which confer ripe apple fruit flavor. Alcohol acyl transferase that can use a wide range of alcohols as substrate to produce esters. The sequence is that of Alcohol acyl transferase 2 from Malus domestica (Apple).